A 432-amino-acid polypeptide reads, in one-letter code: Adenylosuccinate synthetase (432 aa).

Residues 13-19 (GDEGKGK) and 41-43 (GHT) each bind GTP. Aspartate 14 acts as the Proton acceptor in catalysis. Positions 14 and 41 each coordinate Mg(2+). Residues 14–17 (DEGK), 39–42 (NAGH), threonine 130, arginine 144, glutamine 225, threonine 240, and arginine 304 each bind IMP. Histidine 42 (proton donor) is an active-site residue. A substrate-binding site is contributed by 300-306 (ATTGRKR). GTP contacts are provided by residues arginine 306, 332–334 (KLD), and 415–417 (STG).

Belongs to the adenylosuccinate synthetase family. As to quaternary structure, homodimer. Requires Mg(2+) as cofactor.

It localises to the cytoplasm. The enzyme catalyses IMP + L-aspartate + GTP = N(6)-(1,2-dicarboxyethyl)-AMP + GDP + phosphate + 2 H(+). Its pathway is purine metabolism; AMP biosynthesis via de novo pathway; AMP from IMP: step 1/2. Plays an important role in the de novo pathway of purine nucleotide biosynthesis. Catalyzes the first committed step in the biosynthesis of AMP from IMP. This Alteromonas mediterranea (strain DSM 17117 / CIP 110805 / LMG 28347 / Deep ecotype) protein is Adenylosuccinate synthetase.